The primary structure comprises 124 residues: Phosphoribosyl-ATP pyrophosphatase (124 aa).

Belongs to the PRA-PH family.

The protein resides in the cytoplasm. The catalysed reaction is 1-(5-phospho-beta-D-ribosyl)-ATP + H2O = 1-(5-phospho-beta-D-ribosyl)-5'-AMP + diphosphate + H(+). It participates in amino-acid biosynthesis; L-histidine biosynthesis; L-histidine from 5-phospho-alpha-D-ribose 1-diphosphate: step 2/9. The chain is Phosphoribosyl-ATP pyrophosphatase (hisE) from Ralstonia nicotianae (strain ATCC BAA-1114 / GMI1000) (Ralstonia solanacearum).